We begin with the raw amino-acid sequence, 270 residues long: uncharacterized protein (270 aa).

Basic and acidic residues-rich tracts occupy residues 1–13 and 49–73; these read MSEFKIVSRKDLY and EVERTDSSLDLKESNNSAHEQKEEK. Disordered regions lie at residues 1 to 76, 90 to 111, and 204 to 270; these read MSEF…KQEE, STSPAQEEQGSSTQEKDTPQTE, and KKRR…FRTE. Positions 90 to 102 are enriched in polar residues; sequence STSPAQEEQGSST. Residues 204–216 are compositionally biased toward basic residues; it reads KKRRPGQKQRAAK. A compositionally biased stretch (basic and acidic residues) spans 218–235; the sequence is LALERTKERDTKAREIKK. The span at 236–253 shows a compositional bias: basic residues; that stretch reads QLKKKFHKRGGKKNKKKV.

This is an uncharacterized protein from Saccharomyces cerevisiae (strain ATCC 204508 / S288c) (Baker's yeast).